Consider the following 571-residue polypeptide: Phosphomethylpyrimidine synthase (571 aa).

Substrate is bound by residues Asn201, Met230, Tyr259, His295, 315-317, 356-359, and Glu395; these read SRG and DALR. His399 serves as a coordination point for Zn(2+). Tyr422 serves as a coordination point for substrate. His463 contributes to the Zn(2+) binding site. 3 residues coordinate [4Fe-4S] cluster: Cys545, Cys548, and Cys553.

Belongs to the ThiC family. [4Fe-4S] cluster serves as cofactor.

It catalyses the reaction 5-amino-1-(5-phospho-beta-D-ribosyl)imidazole + S-adenosyl-L-methionine = 4-amino-2-methyl-5-(phosphooxymethyl)pyrimidine + CO + 5'-deoxyadenosine + formate + L-methionine + 3 H(+). The protein operates within cofactor biosynthesis; thiamine diphosphate biosynthesis. Catalyzes the synthesis of the hydroxymethylpyrimidine phosphate (HMP-P) moiety of thiamine from aminoimidazole ribotide (AIR) in a radical S-adenosyl-L-methionine (SAM)-dependent reaction. This is Phosphomethylpyrimidine synthase from Chlorobium phaeovibrioides (strain DSM 265 / 1930) (Prosthecochloris vibrioformis (strain DSM 265)).